The sequence spans 98 residues: uncharacterized protein (98 aa).

The protein belongs to the CFAP97 family.

This is an uncharacterized protein from Homo sapiens (Human).